The following is a 30-amino-acid chain: Brevinin-2PTa (30 aa).

Cys-24 and Cys-30 are joined by a disulfide.

Expressed by the skin glands.

The protein resides in the secreted. Functionally, has antibacterial activity against the Gram-positive bacterium S.aureus ATCC 25923 (MIC=18 uM) and the Gram-negative bacterium E.coli ATCC 25726 (MIC=18 uM). The sequence is that of Brevinin-2PTa from Pulchrana picturata (Malaysian fire frog).